The primary structure comprises 62 residues: Photosystem II reaction center protein Z (62 aa).

Transmembrane regions (helical) follow at residues 8-28 and 41-61; these read ALIALVLFSFVMVIGVPVAYA and YLGSAIWAILVVIVAILNFFV.

Belongs to the PsbZ family. PSII is composed of 1 copy each of membrane proteins PsbA, PsbB, PsbC, PsbD, PsbE, PsbF, PsbH, PsbI, PsbJ, PsbK, PsbL, PsbM, PsbT, PsbX, PsbY, PsbZ, Psb30/Ycf12, peripheral proteins PsbO, CyanoQ (PsbQ), PsbU, PsbV and a large number of cofactors. It forms dimeric complexes.

It localises to the cellular thylakoid membrane. Its function is as follows. May control the interaction of photosystem II (PSII) cores with the light-harvesting antenna, regulates electron flow through the 2 photosystem reaction centers. PSII is a light-driven water plastoquinone oxidoreductase, using light energy to abstract electrons from H(2)O, generating a proton gradient subsequently used for ATP formation. The sequence is that of Photosystem II reaction center protein Z from Rippkaea orientalis (strain PCC 8801 / RF-1) (Cyanothece sp. (strain PCC 8801)).